Reading from the N-terminus, the 441-residue chain is Peroxisomal multifunctional enzyme A (441 aa).

Residues 1 to 302 are 3-hydroxyacyl-CoA dehydrogenase; it reads MALNFKDKVV…VNSKPADGES (302 aa). NAD(+)-binding positions include 11-35, Ile19, Asp38, 73-74, and Asn97; these read IVTG…AKVV and SV. Ser149 contacts substrate. The active-site Proton acceptor is the Tyr162. NAD(+) contacts are provided by residues 162–166 and 194–197; these read YGSMK and AASR. An SCP2 domain is found at 331-440; the sequence is ASKIFTTIQG…KLGALMQGSK (110 aa). Residue Gln412 coordinates substrate.

Belongs to the short-chain dehydrogenases/reductases (SDR) family.

The protein localises to the peroxisome. It catalyses the reaction a (3S)-3-hydroxyacyl-CoA + NAD(+) = a 3-oxoacyl-CoA + NADH + H(+). The protein operates within lipid metabolism; fatty acid beta-oxidation. Functionally, enzyme acting on the peroxisomal beta-oxidation pathway for fatty acids. Protects the cells from the increase of the harmful xenobiotic fatty acids incorporated from their diets and optimizes cellular lipid composition for proper development. The protein is Peroxisomal multifunctional enzyme A (mfeA) of Dictyostelium discoideum (Social amoeba).